The sequence spans 89 residues: Acylphosphatase (89 aa).

An Acylphosphatase-like domain is found at 4 to 89; it reads CVRCLIAGRV…IPEIQMFEVR (86 aa). Catalysis depends on residues Arg19 and Asn37.

Belongs to the acylphosphatase family.

It carries out the reaction an acyl phosphate + H2O = a carboxylate + phosphate + H(+). This is Acylphosphatase (acyP) from Nitrosococcus oceani (strain ATCC 19707 / BCRC 17464 / JCM 30415 / NCIMB 11848 / C-107).